Consider the following 239-residue polypeptide: Prolyl hydroxylase EGLN3 (239 aa).

Positions 62 to 73 (AGPRAGVSKRHL) are beta(2)beta(3) 'finger-like' loop. Residues 88–104 (CEAISFLLSLIDRLVLY) form a required for interaction with ADRB2 region. In terms of domain architecture, Fe2OG dioxygenase spans 116 to 214 (ERSKAMVACY…RYAMTVWYFD (99 aa)). The Fe cation site is built by His135, Asp137, and His196. Arg205 lines the 2-oxoglutarate pocket.

In terms of assembly, interacts with BCL2 (via its BH4 domain); the interaction disrupts the BAX-BCL4 complex inhibiting the anti-apoptotic activity of BCL2. Interacts with WDR83; the interaction leads to almost complete elimination of HIF-mediated reporter activity. Interacts with ADRB2; the interaction hydroxylates ADRB2 facilitating its ubiquitination by the VHL-E3 ligase complex. Interacts with PAX2; the interaction targets PAX2 for destruction. Interacts with PKM; the interaction hydroxylates PKM in hypoxia. Interacts with LIMD1, WTIP and AJUBA. Fe(2+) serves as cofactor. Requires L-ascorbate as cofactor. Ubiquitinated by SIAH1 and/or SIAH2 in response to the unfolded protein response (UPR), leading to its degradation. As to expression, widely expressed at low levels. Expressed at higher levels in adult heart (cardiac myocytes, aortic endothelial cells and coronary artery smooth muscle), lung and placenta, and in fetal spleen, heart and skeletal muscle. Also expressed in pancreas. Localized to pancreatic acini and islet cells.

The protein resides in the nucleus. Its subcellular location is the cytoplasm. The catalysed reaction is L-prolyl-[protein] + 2-oxoglutarate + O2 = trans-4-hydroxy-L-prolyl-[protein] + succinate + CO2. It carries out the reaction L-prolyl-[hypoxia-inducible factor alpha subunit] + 2-oxoglutarate + O2 = trans-4-hydroxy-L-prolyl-[hypoxia-inducible factor alpha subunit] + succinate + CO2. Activated in cardiovascular cells and Hela cells following exposure to hypoxia. Inhibited by polynitrogen compounds probably by chelation to Fe(2+) ions. Functionally, prolyl hydroxylase that mediates hydroxylation of proline residues in target proteins, such as PKM, TELO2, ATF4 and HIF1A. Target proteins are preferentially recognized via a LXXLAP motif. Cellular oxygen sensor that catalyzes, under normoxic conditions, the post-translational formation of 4-hydroxyproline in hypoxia-inducible factor (HIF) alpha proteins. Hydroxylates a specific proline found in each of the oxygen-dependent degradation (ODD) domains (N-terminal, NODD, and C-terminal, CODD) of HIF1A. Also hydroxylates HIF2A. Has a preference for the CODD site for both HIF1A and HIF2A. Hydroxylation on the NODD site by EGLN3 appears to require prior hydroxylation on the CODD site. Hydroxylated HIFs are then targeted for proteasomal degradation via the von Hippel-Lindau ubiquitination complex. Under hypoxic conditions, the hydroxylation reaction is attenuated allowing HIFs to escape degradation resulting in their translocation to the nucleus, heterodimerization with HIF1B, and increased expression of hypoxy-inducible genes. ELGN3 is the most important isozyme in limiting physiological activation of HIFs (particularly HIF2A) in hypoxia. Also hydroxylates PKM in hypoxia, limiting glycolysis. Under normoxia, hydroxylates and regulates the stability of ADRB2. Regulator of cardiomyocyte and neuronal apoptosis. In cardiomyocytes, inhibits the anti-apoptotic effect of BCL2 by disrupting the BAX-BCL2 complex. In neurons, has a NGF-induced proapoptotic effect, probably through regulating CASP3 activity. Also essential for hypoxic regulation of neutrophilic inflammation. Plays a crucial role in DNA damage response (DDR) by hydroxylating TELO2, promoting its interaction with ATR which is required for activation of the ATR/CHK1/p53 pathway. Also mediates hydroxylation of ATF4, leading to decreased protein stability of ATF4. This Homo sapiens (Human) protein is Prolyl hydroxylase EGLN3.